Reading from the N-terminus, the 490-residue chain is Tryptophan 5-hydroxylase 2 (490 aa).

Position 19 is a phosphoserine (Ser-19). The span at 31–42 (LGSSTLNKPNSG) shows a compositional bias: polar residues. The interval 31–58 (LGSSTLNKPNSGKNDDKGNKGSSKREAA) is disordered. Basic and acidic residues predominate over residues 43–58 (KNDDKGNKGSSKREAA). In terms of domain architecture, ACT spans 65-140 (AVVFSLKNEV…TIVTLNPPEN (76 aa)). Residues His-318, His-323, and Glu-363 each contribute to the Fe cation site.

The protein belongs to the biopterin-dependent aromatic amino acid hydroxylase family. As to quaternary structure, interacts with DNAJC12. Fe(2+) serves as cofactor. As to expression, brain specific.

It carries out the reaction (6R)-L-erythro-5,6,7,8-tetrahydrobiopterin + L-tryptophan + O2 = 5-hydroxy-L-tryptophan + (4aS,6R)-4a-hydroxy-L-erythro-5,6,7,8-tetrahydrobiopterin. It participates in aromatic compound metabolism; serotonin biosynthesis; serotonin from L-tryptophan: step 1/2. In Homo sapiens (Human), this protein is Tryptophan 5-hydroxylase 2 (TPH2).